A 700-amino-acid polypeptide reads, in one-letter code: Transketolase (700 aa).

Position 45 (histidine 45) interacts with substrate. Thiamine diphosphate is bound by residues threonine 48, histidine 85, and glycine 133 to leucine 135. Residue aspartate 177 coordinates Mg(2+). Positions 178 and 207 each coordinate thiamine diphosphate. The Mg(2+) site is built by asparagine 207 and isoleucine 209. Histidine 283, arginine 378, and serine 405 together coordinate substrate. Histidine 283 serves as a coordination point for thiamine diphosphate. The active-site Proton donor is the glutamate 441. Position 467 (phenylalanine 467) interacts with thiamine diphosphate. Substrate-binding residues include histidine 491, aspartate 499, and arginine 552.

Belongs to the transketolase family. As to quaternary structure, homodimer. The cofactor is Mg(2+). Requires Ca(2+) as cofactor. It depends on Mn(2+) as a cofactor. Co(2+) is required as a cofactor. Thiamine diphosphate serves as cofactor.

The enzyme catalyses D-sedoheptulose 7-phosphate + D-glyceraldehyde 3-phosphate = aldehydo-D-ribose 5-phosphate + D-xylulose 5-phosphate. Catalyzes the transfer of a two-carbon ketol group from a ketose donor to an aldose acceptor, via a covalent intermediate with the cofactor thiamine pyrophosphate. The chain is Transketolase (tkt) from Mycobacterium bovis (strain ATCC BAA-935 / AF2122/97).